A 452-amino-acid polypeptide reads, in one-letter code: Flavanone 7-O-glucoside 2''-O-beta-L-rhamnosyltransferase (452 aa).

His21 serves as the catalytic Proton acceptor. Residue His21 participates in an anthocyanidin binding. Catalysis depends on Asp121, which acts as the Charge relay. Residues 136–156 (IAAILFLPLSAVACSFLLHNI) form a helical membrane-spanning segment. UDP-beta-L-rhamnose-binding residues include Ser268, Val330, His347, Gly351, Ser352, and Glu355. A coiled-coil region spans residues 407–436 (KHVVLQEEAKQIRRKANEISESMKKIGDAE).

The protein belongs to the UDP-glycosyltransferase family. Monomer. Expressed in young fruits and leaves.

Its subcellular location is the membrane. The enzyme catalyses flavanone 7-O-beta-D-glucoside + UDP-beta-L-rhamnose = flavanone 7-O-[alpha-L-rhamnosyl-(1-&gt;2)-beta-D-glucoside] + UDP + H(+). Its function is as follows. Involved in the production of the bitter neohesperidosides in citrus. Shows a strict specificity for UDP-rhamnose as donor. This chain is Flavanone 7-O-glucoside 2''-O-beta-L-rhamnosyltransferase (C12RT1), found in Citrus maxima (Pomelo).